Consider the following 110-residue polypeptide: Red pigment-concentrating prohormone (110 aa).

The signal sequence occupies residues 1 to 25 (MVRRTGVTLLVVALVVVALVSSVSA). A Pyrrolidone carboxylic acid modification is found at Q26. Tryptophan amide is present on W33.

The protein belongs to the AKH/HRTH/RPCH family.

It is found in the secreted. In terms of biological role, this hormone adapts the animal to light backgrounds by stimulating concentration of the pigment of its red body-chromatophores. This chain is Red pigment-concentrating prohormone, found in Carcinus maenas (Common shore crab).